The chain runs to 717 residues: Catalase-peroxidase (717 aa).

Positions 1 to 12 (MTSKGMCPVAHG) are cleaved as a signal peptide. The tryptophyl-tyrosyl-methioninium (Trp-Tyr) (with M-247) cross-link spans 93-221 (WHSAGSYRIA…LAAVMMGLIY (129 aa)). Residue histidine 94 is the Proton acceptor of the active site. The segment at residues 221-247 (YVNPEGVDGKPDPLKTAQDMRVTFARM) is a cross-link (tryptophyl-tyrosyl-methioninium (Tyr-Met) (with W-93)). Histidine 262 is a heme b binding site.

It belongs to the peroxidase family. Peroxidase/catalase subfamily. In terms of assembly, homodimer or homotetramer. It depends on heme b as a cofactor. Post-translationally, formation of the three residue Trp-Tyr-Met cross-link is important for the catalase, but not the peroxidase activity of the enzyme.

The catalysed reaction is H2O2 + AH2 = A + 2 H2O. It catalyses the reaction 2 H2O2 = O2 + 2 H2O. Bifunctional enzyme with both catalase and broad-spectrum peroxidase activity. The polypeptide is Catalase-peroxidase (Polynucleobacter asymbioticus (strain DSM 18221 / CIP 109841 / QLW-P1DMWA-1) (Polynucleobacter necessarius subsp. asymbioticus)).